A 185-amino-acid polypeptide reads, in one-letter code: Threonylcarbamoyl-AMP synthase (185 aa).

The YrdC-like domain occupies Ser4–Ala185.

It belongs to the SUA5 family. TsaC subfamily.

Its subcellular location is the cytoplasm. It catalyses the reaction L-threonine + hydrogencarbonate + ATP = L-threonylcarbamoyladenylate + diphosphate + H2O. Its function is as follows. Required for the formation of a threonylcarbamoyl group on adenosine at position 37 (t(6)A37) in tRNAs that read codons beginning with adenine. Catalyzes the conversion of L-threonine, HCO(3)(-)/CO(2) and ATP to give threonylcarbamoyl-AMP (TC-AMP) as the acyladenylate intermediate, with the release of diphosphate. The protein is Threonylcarbamoyl-AMP synthase of Pseudomonas paraeruginosa (strain DSM 24068 / PA7) (Pseudomonas aeruginosa (strain PA7)).